The primary structure comprises 139 residues: MARTKQTARKSTGAKVPRKHIGSKQAHKQTPVSSSSGGVKKVHRFRPGTVALREIRKYQKSTDLLIRKLPFQRLVREIAQEFKTDLRFQSAAIGALQEASEAYLVGLFEDTNLCAIHAKRVTIMPKDIHLARRIRGERS.

A disordered region spans residues 1 to 43; the sequence is MARTKQTARKSTGAKVPRKHIGSKQAHKQTPVSSSSGGVKKVH. Position 5 is an N6,N6,N6-trimethyllysine; by set1; alternate (lysine 5). Residue lysine 5 is modified to N6,N6-dimethyllysine; by set1; alternate. Lysine 5 and lysine 10 each carry N6-acetyllysine; alternate. Lysine 5 is modified (N6-methyllysine; by set1; alternate). Position 10 is an N6,N6,N6-trimethyllysine; alternate (lysine 10). Position 10 is an N6,N6-dimethyllysine; alternate (lysine 10). Lysine 10 bears the N6-methyllysine; alternate mark. At serine 11 the chain carries Phosphoserine. Lysine 15 carries the post-translational modification N6-acetyllysine. Residues 16–27 show a composition bias toward basic residues; it reads VPRKHIGSKQAH. N6-acetyllysine; alternate is present on residues lysine 19, lysine 24, lysine 28, and lysine 40. Residues lysine 19, lysine 24, lysine 28, and lysine 40 each carry the N6-methyllysine; alternate modification. Residues lysine 28 and lysine 40 each carry the N6,N6,N6-trimethyllysine; alternate modification. Residues lysine 28 and lysine 40 each carry the N6,N6-dimethyllysine; alternate modification. Lysine 60 carries the N6-acetyllysine modification. N6,N6,N6-trimethyllysine; alternate is present on lysine 83. An N6,N6-dimethyllysine; alternate modification is found at lysine 83. Residue lysine 83 is modified to N6-methyllysine; alternate.

The protein belongs to the histone H3 family. The nucleosome is a histone octamer containing two molecules each of H2A, H2B, H3 and H4 assembled in one H3-H4 heterotetramer and two H2A-H2B heterodimers. The octamer wraps approximately 147 bp of DNA. In terms of processing, acetylation is generally linked to gene activation. Post-translationally, different methylation states of H3K4 mark distinct developmental phases. H3K4me2 is associated with euchromatic regions. H3K4me3 is a mark of active chromatin. set1 is responsible for all mono-, di- and tri-methylation of H3K4. H3K4me facilitates subsequent acetylation of H3 and H4. Methylation at H3K9 and H3K27 are linked to gene repression. H3S10ph, which is linked to gene activation, prevents methylation at H3K9 but facilitates acetylation of H3 and H4.

The protein localises to the nucleus. It is found in the chromosome. Core component of nucleosome. Nucleosomes wrap and compact DNA into chromatin, limiting DNA accessibility to the cellular machineries which require DNA as a template. Histones thereby play a central role in transcription regulation, DNA repair, DNA replication and chromosomal stability. DNA accessibility is regulated via a complex set of post-translational modifications of histones, also called histone code, and nucleosome remodeling. This Dictyostelium discoideum (Social amoeba) protein is Histone H3.3 type a (H3a).